We begin with the raw amino-acid sequence, 194 residues long: AN1-type zinc finger protein 2A (194 aa).

2 consecutive AN1-type zinc fingers follow at residues 4-52 and 94-142; these read PDLG…QKDV and KIFT…RPTI. Zn(2+) contacts are provided by Cys-10, Cys-15, Cys-25, Cys-28, Cys-33, His-36, His-42, Cys-44, Cys-100, Cys-105, Cys-115, Cys-118, Cys-123, His-126, His-132, and Cys-134. The disordered stretch occupies residues 145–164; the sequence is GCSPVTASESKPSGDPHPGS.

It is found in the cytoplasm. Its subcellular location is the nucleus. The sequence is that of AN1-type zinc finger protein 2A (ZFAND2A) from Pongo abelii (Sumatran orangutan).